Reading from the N-terminus, the 677-residue chain is Methionine--tRNA ligase (677 aa).

Residues P15–H25 carry the 'HIGH' region motif. The Zn(2+) site is built by C146, C149, C159, and C162. A 'KMSKS' region motif is present at residues K333–S337. An ATP-binding site is contributed by K336. The region spanning D575–K677 is the tRNA-binding domain.

The protein belongs to the class-I aminoacyl-tRNA synthetase family. MetG type 1 subfamily. As to quaternary structure, homodimer. Zn(2+) serves as cofactor.

The protein resides in the cytoplasm. It carries out the reaction tRNA(Met) + L-methionine + ATP = L-methionyl-tRNA(Met) + AMP + diphosphate. Its function is as follows. Is required not only for elongation of protein synthesis but also for the initiation of all mRNA translation through initiator tRNA(fMet) aminoacylation. This is Methionine--tRNA ligase from Klebsiella pneumoniae subsp. pneumoniae (strain ATCC 700721 / MGH 78578).